We begin with the raw amino-acid sequence, 415 residues long: Imidazolonepropionase (415 aa).

The Fe(3+) site is built by H83 and H85. Zn(2+) contacts are provided by H83 and H85. 4-imidazolone-5-propanoate-binding residues include R92, Y155, and H188. Y155 lines the N-formimidoyl-L-glutamate pocket. H250 serves as a coordination point for Fe(3+). H250 is a Zn(2+) binding site. Q253 is a binding site for 4-imidazolone-5-propanoate. Position 324 (D324) interacts with Fe(3+). D324 provides a ligand contact to Zn(2+). N-formimidoyl-L-glutamate contacts are provided by N326 and G328. Residue S329 participates in 4-imidazolone-5-propanoate binding.

The protein belongs to the metallo-dependent hydrolases superfamily. HutI family. Zn(2+) is required as a cofactor. The cofactor is Fe(3+).

The protein localises to the cytoplasm. The enzyme catalyses 4-imidazolone-5-propanoate + H2O = N-formimidoyl-L-glutamate. Its pathway is amino-acid degradation; L-histidine degradation into L-glutamate; N-formimidoyl-L-glutamate from L-histidine: step 3/3. Catalyzes the hydrolytic cleavage of the carbon-nitrogen bond in imidazolone-5-propanoate to yield N-formimidoyl-L-glutamate. It is the third step in the universal histidine degradation pathway. This Rubrobacter xylanophilus (strain DSM 9941 / JCM 11954 / NBRC 16129 / PRD-1) protein is Imidazolonepropionase.